The sequence spans 311 residues: Formimidoylglutamase (311 aa).

Positions 127, 152, 154, 156, 236, and 238 each coordinate Mn(2+).

Belongs to the arginase family. Requires Mn(2+) as cofactor.

The enzyme catalyses N-formimidoyl-L-glutamate + H2O = formamide + L-glutamate. It functions in the pathway amino-acid degradation; L-histidine degradation into L-glutamate; L-glutamate from N-formimidoyl-L-glutamate (hydrolase route): step 1/1. In terms of biological role, catalyzes the conversion of N-formimidoyl-L-glutamate to L-glutamate and formamide. The sequence is that of Formimidoylglutamase from Macrococcus caseolyticus (strain JCSC5402) (Macrococcoides caseolyticum).